Consider the following 351-residue polypeptide: Inactive RHOMBOID-like protein 8 (351 aa).

Helical transmembrane passes span 48 to 68 (TWLVSVFVLLQIVLFAVTMGV), 130 to 150 (WLHSGLFHLFINLGSLIFVGI), 160 to 180 (RIAVIYFLSGIMGSLFAVLFV), 183 to 203 (IPSISSGAAFFGLIGAMLSAL), 216 to 236 (ALAIIFTIFTVNFLIGFLPFI), 239 to 259 (FANIGGFISGFLLGFVLLFKP), and 294 to 314 (IICLLVFCGILAGVLLAACWG).

Belongs to the peptidase S54 family. In terms of tissue distribution, expressed in pollen mother cell.

It is found in the golgi apparatus membrane. Its function is as follows. Probable inactive rhomboid-type serine protease. In terms of biological role, probably essential for the meiosis stage-specific callose accumulation and pollen exine formation. The sequence is that of Inactive RHOMBOID-like protein 8 from Arabidopsis thaliana (Mouse-ear cress).